The sequence spans 86 residues: Large ribosomal subunit protein bL27 (86 aa).

A disordered region spans residues 1–24 (MAHKKAGGSSRNGRDSEGRRLGVK).

It belongs to the bacterial ribosomal protein bL27 family.

The protein is Large ribosomal subunit protein bL27 of Magnetococcus marinus (strain ATCC BAA-1437 / JCM 17883 / MC-1).